An 838-amino-acid chain; its full sequence is Probable inorganic carbon transporter subunit DabA (838 aa).

The Zn(2+) site is built by C353, D355, H537, and C552.

It belongs to the inorganic carbon transporter (TC 9.A.2) DabA family. Forms a complex with DabB. Requires Zn(2+) as cofactor.

Its subcellular location is the cell membrane. Functionally, part of an energy-coupled inorganic carbon pump. The sequence is that of Probable inorganic carbon transporter subunit DabA from Chloroflexus aurantiacus (strain ATCC 29366 / DSM 635 / J-10-fl).